Consider the following 397-residue polypeptide: Succinate--CoA ligase [ADP-forming] subunit beta (397 aa).

Residues Lys9–Glu253 enclose the ATP-grasp domain. ATP-binding positions include Lys50, Gly57–Gly59, Val106, and Glu116. Residues Asn208 and Asp222 each contribute to the Mg(2+) site. Residues Asn273 and Gly330 to Val332 each bind substrate.

It belongs to the succinate/malate CoA ligase beta subunit family. In terms of assembly, heterotetramer of two alpha and two beta subunits. Requires Mg(2+) as cofactor.

The enzyme catalyses succinate + ATP + CoA = succinyl-CoA + ADP + phosphate. It catalyses the reaction GTP + succinate + CoA = succinyl-CoA + GDP + phosphate. It functions in the pathway carbohydrate metabolism; tricarboxylic acid cycle; succinate from succinyl-CoA (ligase route): step 1/1. Its function is as follows. Succinyl-CoA synthetase functions in the citric acid cycle (TCA), coupling the hydrolysis of succinyl-CoA to the synthesis of either ATP or GTP and thus represents the only step of substrate-level phosphorylation in the TCA. The beta subunit provides nucleotide specificity of the enzyme and binds the substrate succinate, while the binding sites for coenzyme A and phosphate are found in the alpha subunit. This Flavobacterium johnsoniae (strain ATCC 17061 / DSM 2064 / JCM 8514 / BCRC 14874 / CCUG 350202 / NBRC 14942 / NCIMB 11054 / UW101) (Cytophaga johnsonae) protein is Succinate--CoA ligase [ADP-forming] subunit beta.